Reading from the N-terminus, the 527-residue chain is Proline--tRNA ligase (527 aa).

It belongs to the class-II aminoacyl-tRNA synthetase family. ProS type 3 subfamily. As to quaternary structure, homodimer.

It localises to the cytoplasm. It catalyses the reaction tRNA(Pro) + L-proline + ATP = L-prolyl-tRNA(Pro) + AMP + diphosphate. Its function is as follows. Catalyzes the attachment of proline to tRNA(Pro) in a two-step reaction: proline is first activated by ATP to form Pro-AMP and then transferred to the acceptor end of tRNA(Pro). The polypeptide is Proline--tRNA ligase (Sphingopyxis alaskensis (strain DSM 13593 / LMG 18877 / RB2256) (Sphingomonas alaskensis)).